The following is a 289-amino-acid chain: 4-diphosphocytidyl-2-C-methyl-D-erythritol kinase (289 aa).

Residue lysine 10 is part of the active site. Position 94-104 (94-104 (PVAAGLAGGSS)) interacts with ATP. Aspartate 136 is a catalytic residue.

It belongs to the GHMP kinase family. IspE subfamily.

It carries out the reaction 4-CDP-2-C-methyl-D-erythritol + ATP = 4-CDP-2-C-methyl-D-erythritol 2-phosphate + ADP + H(+). Its pathway is isoprenoid biosynthesis; isopentenyl diphosphate biosynthesis via DXP pathway; isopentenyl diphosphate from 1-deoxy-D-xylulose 5-phosphate: step 3/6. Its function is as follows. Catalyzes the phosphorylation of the position 2 hydroxy group of 4-diphosphocytidyl-2C-methyl-D-erythritol. This is 4-diphosphocytidyl-2-C-methyl-D-erythritol kinase from Bacillus licheniformis (strain ATCC 14580 / DSM 13 / JCM 2505 / CCUG 7422 / NBRC 12200 / NCIMB 9375 / NCTC 10341 / NRRL NRS-1264 / Gibson 46).